A 645-amino-acid chain; its full sequence is MSVINCEEVKRDEFHTEKYYDSYNIFGAHIVTEDEMRGVRFTVWAPHAKAMSVVGDFNEWDYEQHKMLQVTEEGIWSLFIPHIEEKEIYKYAIETTAGDVIFKADPYAVYAEVRPNTASVVFDIKGYEWNDKNWSRKKKKKSVYKEAMTVYELHFGSWKKKEDGTLYSYREMAEELIPYVVEHQFTHIEIMPLVEHPYDRSWGYQGTGYYAATSRFGTPHDLMYFVDECHKYGIGVILDWVPGHFCKDAHGLYLFDGTPTYEYKDKDVQENPVWGTVNFDLGKREVRNFLISNALFWMRYFHIDGFRVDAVANMLYWNKEGQEQSNEHAVSFLRELNEAVFAEDEDFLMTAEDSTAWPLVTAPTYEGGLGFNYKWNMGWMNDVLKYMECAPEYRKYIHEKMTFSLLYAYSENFILPLSHDEVVHGKKSLLNKMPGDYWDKFAQLRLLYGYFFTHPGKKLLFMGGEFGQFDEWKDLEDLDWNLHDFEMHRYMHDYFKELIALYKRSKPLWQLDHSPEGFQWIDANNNEQSIFSFIRQGDKQEDALVVVCNFTKATYENYKVGVPDFEYYNEVLNSDAEQYGGSGQVNKKRLKAIQEPFHNQAAHVEITIPPFGVSILRPVKTRKGSKKQDGSKTKVRSNVTSRGKR.

D309 (nucleophile) is an active-site residue. E352 functions as the Proton donor in the catalytic mechanism. The interval V619–R645 is disordered. Residues R636–R645 show a composition bias toward polar residues.

This sequence belongs to the glycosyl hydrolase 13 family. GlgB subfamily. Monomer.

It carries out the reaction Transfers a segment of a (1-&gt;4)-alpha-D-glucan chain to a primary hydroxy group in a similar glucan chain.. The protein operates within glycan biosynthesis; glycogen biosynthesis. Functionally, catalyzes the formation of the alpha-1,6-glucosidic linkages in glycogen by scission of a 1,4-alpha-linked oligosaccharide from growing alpha-1,4-glucan chains and the subsequent attachment of the oligosaccharide to the alpha-1,6 position. The protein is 1,4-alpha-glucan branching enzyme GlgB of Bacillus cereus (strain AH187).